The following is a 320-amino-acid chain: Transcription factor NAI1 (320 aa).

The interval 53–105 (TKQMKTNNNMNSTSSSPSSSSSSGSRTSQVISFGSPDTKTNPVETSLNFSNQV) is disordered. The segment covering 58 to 80 (TNNNMNSTSSSPSSSSSSGSRTS) has biased composition (low complexity). Polar residues predominate over residues 81–105 (QVISFGSPDTKTNPVETSLNFSNQV). In terms of domain architecture, bHLH spans 128–177 (HLLKEHVLAERKRRQKLNERLIALSALLPGLKKTDKATVLEDAIKHLKQL).

Homodimer. As to expression, expressed constitutively in roots, leaves, stems, and flowers.

The protein localises to the nucleus. Transcription activator that regulates the expression of at least NAI2, PYK10 and PBP1. Required for and mediates the formation of endoplasmic reticulum bodies (ER bodies). Involved in the symbiotic interactions with the endophytes of the Sebacinaceae fungus family, such as Piriformospora indica and Sebacina. The sequence is that of Transcription factor NAI1 (NAI1) from Arabidopsis thaliana (Mouse-ear cress).